A 534-amino-acid polypeptide reads, in one-letter code: Chaperonin GroEL (534 aa).

Residues 29 to 32 (TAGP), 86 to 90 (DGTTT), Gly-413, and Asp-494 contribute to the ATP site.

Belongs to the chaperonin (HSP60) family. As to quaternary structure, forms a cylinder of 14 subunits composed of two heptameric rings stacked back-to-back. Interacts with the co-chaperonin GroES.

It localises to the cytoplasm. The catalysed reaction is ATP + H2O + a folded polypeptide = ADP + phosphate + an unfolded polypeptide.. In terms of biological role, together with its co-chaperonin GroES, plays an essential role in assisting protein folding. The GroEL-GroES system forms a nano-cage that allows encapsulation of the non-native substrate proteins and provides a physical environment optimized to promote and accelerate protein folding. The sequence is that of Chaperonin GroEL from Mycoplasmoides gallisepticum (strain R(low / passage 15 / clone 2)) (Mycoplasma gallisepticum).